Consider the following 562-residue polypeptide: Tryptophan 2-monooxygenase (562 aa).

Residues Ser54, Glu74, Arg76, Arg82, and Arg104 each coordinate FMN. Arg104 is a substrate binding site.

This sequence belongs to the tryptophan 2-monooxygenase family. Requires FMN as cofactor.

It carries out the reaction L-tryptophan + O2 = indole-3-acetamide + CO2 + H2O. The protein operates within plant hormone metabolism; auxin biosynthesis. This chain is Tryptophan 2-monooxygenase (iaaM), found in Pantoea agglomerans pv. gypsophilae (Erwinia herbicola).